We begin with the raw amino-acid sequence, 328 residues long: Malate dehydrogenase 2 (328 aa).

Residue 12-18 (GAAGQIA) participates in NAD(+) binding. Substrate contacts are provided by R93 and R99. NAD(+)-binding positions include N106, Q113, and 130–132 (VGN). The substrate site is built by N132 and R163. The Proton acceptor role is filled by H188.

The protein belongs to the LDH/MDH superfamily. MDH type 2 family.

The catalysed reaction is (S)-malate + NAD(+) = oxaloacetate + NADH + H(+). In terms of biological role, catalyzes the reversible oxidation of malate to oxaloacetate. This Burkholderia vietnamiensis (strain G4 / LMG 22486) (Burkholderia cepacia (strain R1808)) protein is Malate dehydrogenase 2.